We begin with the raw amino-acid sequence, 303 residues long: Glycine--tRNA ligase alpha subunit (303 aa).

The protein belongs to the class-II aminoacyl-tRNA synthetase family. Tetramer of two alpha and two beta subunits.

Its subcellular location is the cytoplasm. The enzyme catalyses tRNA(Gly) + glycine + ATP = glycyl-tRNA(Gly) + AMP + diphosphate. This Syntrophomonas wolfei subsp. wolfei (strain DSM 2245B / Goettingen) protein is Glycine--tRNA ligase alpha subunit.